A 272-amino-acid chain; its full sequence is Formamidopyrimidine-DNA glycosylase (272 aa).

Residue proline 2 is the Schiff-base intermediate with DNA of the active site. The Proton donor role is filled by glutamate 3. Residue lysine 58 is the Proton donor; for beta-elimination activity of the active site. 3 residues coordinate DNA: histidine 91, arginine 111, and arginine 153. Residues 238 to 272 (AVYGRANKACVICSKPLKEIRQAQRSTVFCINCQS) form an FPG-type zinc finger. Arginine 262 (proton donor; for delta-elimination activity) is an active-site residue.

Belongs to the FPG family. Monomer. Requires Zn(2+) as cofactor.

The catalysed reaction is Hydrolysis of DNA containing ring-opened 7-methylguanine residues, releasing 2,6-diamino-4-hydroxy-5-(N-methyl)formamidopyrimidine.. It carries out the reaction 2'-deoxyribonucleotide-(2'-deoxyribose 5'-phosphate)-2'-deoxyribonucleotide-DNA = a 3'-end 2'-deoxyribonucleotide-(2,3-dehydro-2,3-deoxyribose 5'-phosphate)-DNA + a 5'-end 5'-phospho-2'-deoxyribonucleoside-DNA + H(+). In terms of biological role, involved in base excision repair of DNA damaged by oxidation or by mutagenic agents. Acts as a DNA glycosylase that recognizes and removes damaged bases. Has a preference for oxidized purines, such as 7,8-dihydro-8-oxoguanine (8-oxoG). Has AP (apurinic/apyrimidinic) lyase activity and introduces nicks in the DNA strand. Cleaves the DNA backbone by beta-delta elimination to generate a single-strand break at the site of the removed base with both 3'- and 5'-phosphates. In Marinomonas sp. (strain MWYL1), this protein is Formamidopyrimidine-DNA glycosylase.